Here is a 428-residue protein sequence, read N- to C-terminus: Phosphomethylpyrimidine synthase 2 (428 aa).

Residues methionine 94, tyrosine 123, histidine 162, 184-186 (SRG), 225-228 (NGMR), and glutamate 264 contribute to the substrate site. Residue histidine 268 coordinates Zn(2+). Tyrosine 291 serves as a coordination point for substrate. Histidine 332 lines the Zn(2+) pocket. Cysteine 408, cysteine 411, and cysteine 415 together coordinate [4Fe-4S] cluster.

It belongs to the ThiC family. Requires [4Fe-4S] cluster as cofactor.

The enzyme catalyses 5-amino-1-(5-phospho-beta-D-ribosyl)imidazole + S-adenosyl-L-methionine = 4-amino-2-methyl-5-(phosphooxymethyl)pyrimidine + CO + 5'-deoxyadenosine + formate + L-methionine + 3 H(+). The protein operates within cofactor biosynthesis; thiamine diphosphate biosynthesis. In terms of biological role, catalyzes the synthesis of the hydroxymethylpyrimidine phosphate (HMP-P) moiety of thiamine from aminoimidazole ribotide (AIR) in a radical S-adenosyl-L-methionine (SAM)-dependent reaction. The polypeptide is Phosphomethylpyrimidine synthase 2 (Methanosarcina mazei (strain ATCC BAA-159 / DSM 3647 / Goe1 / Go1 / JCM 11833 / OCM 88) (Methanosarcina frisia)).